Here is a 293-residue protein sequence, read N- to C-terminus: Pyridoxal 5'-phosphate synthase subunit PdxS (293 aa).

D-ribose 5-phosphate is bound at residue aspartate 23. Lysine 80 acts as the Schiff-base intermediate with D-ribose 5-phosphate in catalysis. Glycine 152 provides a ligand contact to D-ribose 5-phosphate. A D-glyceraldehyde 3-phosphate-binding site is contributed by arginine 164. D-ribose 5-phosphate-binding positions include glycine 213 and 234 to 235 (GS).

This sequence belongs to the PdxS/SNZ family. In the presence of PdxT, forms a dodecamer of heterodimers.

It carries out the reaction aldehydo-D-ribose 5-phosphate + D-glyceraldehyde 3-phosphate + L-glutamine = pyridoxal 5'-phosphate + L-glutamate + phosphate + 3 H2O + H(+). Its pathway is cofactor biosynthesis; pyridoxal 5'-phosphate biosynthesis. Catalyzes the formation of pyridoxal 5'-phosphate from ribose 5-phosphate (RBP), glyceraldehyde 3-phosphate (G3P) and ammonia. The ammonia is provided by the PdxT subunit. Can also use ribulose 5-phosphate and dihydroxyacetone phosphate as substrates, resulting from enzyme-catalyzed isomerization of RBP and G3P, respectively. The sequence is that of Pyridoxal 5'-phosphate synthase subunit PdxS from Thermus thermophilus (strain ATCC BAA-163 / DSM 7039 / HB27).